Reading from the N-terminus, the 406-residue chain is CRISP/Allergen/PR-1 (406 aa).

An N-terminal signal peptide occupies residues 1–18 (MHFQVILMMMWLWLEAEG). The N-linked (GlcNAc...) asparagine glycan is linked to N39. Positions 58–205 (LREHNKLRSR…TFKDLYTCNY (148 aa)) constitute an SCP domain.

This sequence belongs to the CRISP family. Post-translationally, contains 9 disulfide bonds. As to expression, expressed by the venom gland.

It is found in the secreted. This is CRISP/Allergen/PR-1 from Trittame loki (Brush-footed trapdoor spider).